A 97-amino-acid polypeptide reads, in one-letter code: Large ribosomal subunit protein eL21 (97 aa).

Belongs to the eukaryotic ribosomal protein eL21 family.

The protein is Large ribosomal subunit protein eL21 of Methanospirillum hungatei JF-1 (strain ATCC 27890 / DSM 864 / NBRC 100397 / JF-1).